The chain runs to 142 residues: Transcriptional regulator MraZ (142 aa).

SpoVT-AbrB domains follow at residues 5–51 (ASSL…PRNE) and 77–120 (AMDV…DAAT).

This sequence belongs to the MraZ family. In terms of assembly, forms oligomers.

It is found in the cytoplasm. The protein resides in the nucleoid. The chain is Transcriptional regulator MraZ from Polaromonas sp. (strain JS666 / ATCC BAA-500).